Reading from the N-terminus, the 166-residue chain is Stress response protein NhaX (166 aa).

The protein belongs to the universal stress protein A family.

The protein is Stress response protein NhaX (nhaX) of Bacillus subtilis (strain 168).